The sequence spans 327 residues: dTDP-4-dehydrorhamnose reductase (327 aa).

The interval 1–22 (MDLINGMGTSPGYWRTPREPGN) is disordered. NADH is bound by residues 43 to 45 (GMV), 69 to 70 (DI), and 91 to 93 (AYT). NADPH is bound by residues 44 to 45 (MV), 69 to 70 (DI), and 91 to 93 (AYT). Position 132–133 (132–133 (TD)) interacts with dTDP-beta-L-rhamnose. Residues Tyr-157 and Lys-161 each contribute to the NADH site. Residues Tyr-157 and Lys-161 each coordinate NADPH. The active-site Proton donor/acceptor is the Tyr-157. Residue Trp-182 coordinates dTDP-beta-L-rhamnose. The segment covering 264-276 (PERVRPCGSDRHP) has biased composition (basic and acidic residues). The tract at residues 264 to 292 (PERVRPCGSDRHPRPAPRPSYTVLSSQRS) is disordered.

This sequence belongs to the dTDP-4-dehydrorhamnose reductase family. Requires Mg(2+) as cofactor.

It catalyses the reaction dTDP-beta-L-rhamnose + NADP(+) = dTDP-4-dehydro-beta-L-rhamnose + NADPH + H(+). It participates in carbohydrate biosynthesis; dTDP-L-rhamnose biosynthesis. Involved in the biosynthesis of the dTDP-L-rhamnose which is a component of the critical linker, D-N-acetylglucosamine-L-rhamnose disaccharide, which connects the galactan region of arabinogalactan to peptidoglycan via a phosphodiester linkage. Catalyzes the reduction of dTDP-6-deoxy-L-lyxo-4-hexulose to yield dTDP-L-rhamnose. This is dTDP-4-dehydrorhamnose reductase from Mycolicibacterium smegmatis (strain ATCC 700084 / mc(2)155) (Mycobacterium smegmatis).